A 118-amino-acid polypeptide reads, in one-letter code: Ribonuclease P protein component (118 aa).

The protein belongs to the RnpA family. In terms of assembly, consists of a catalytic RNA component (M1 or rnpB) and a protein subunit.

It carries out the reaction Endonucleolytic cleavage of RNA, removing 5'-extranucleotides from tRNA precursor.. Its function is as follows. RNaseP catalyzes the removal of the 5'-leader sequence from pre-tRNA to produce the mature 5'-terminus. It can also cleave other RNA substrates such as 4.5S RNA. The protein component plays an auxiliary but essential role in vivo by binding to the 5'-leader sequence and broadening the substrate specificity of the ribozyme. The sequence is that of Ribonuclease P protein component from Levilactobacillus brevis (strain ATCC 367 / BCRC 12310 / CIP 105137 / JCM 1170 / LMG 11437 / NCIMB 947 / NCTC 947) (Lactobacillus brevis).